A 430-amino-acid polypeptide reads, in one-letter code: MLDPNLLRNEPDAVAEKLARRGFKLDVDKLGALEERRKVLQVKTENLQAERNSRSKSIGQAKARGEDIEPLRLEVNKLGEELDAAKAELDALQAEIRDIALTIPNLPADEVPVGKDENDNVEVSRWGTPREFDFEVRDHVTLGEMHSGLDFAAAVKLTGSRFVVMKGQIARMHRALAQFMLDLHTEQHGYSENYVPYLVNQDTLYGTGQLPKFAGDLFHTRPLEEEADTSNYALIPTAEVPLTNLVRGEIIDEDDLPIKMTAHTPCFRSEAGSYGRDTRGLIRMHQFDKVEMVQIVRPEDSMAALEEMTGHAEKVLQLLGLPYRKIILCTGDMGFGACKTYDLEVWIPAQNTYREISSCSNVWDFQARRMQARCRSKSDKKTRLVHTLNGSGLAVGRTLVAVMENYQQADGRIEVPEVLRPYMNGLEYIG.

L-serine is bound at residue 237-239; that stretch reads TAE. 268–270 serves as a coordination point for ATP; the sequence is RSE. Position 291 (Glu291) interacts with L-serine. An ATP-binding site is contributed by 355-358; that stretch reads EISS. Position 391 (Ser391) interacts with L-serine.

The protein belongs to the class-II aminoacyl-tRNA synthetase family. Type-1 seryl-tRNA synthetase subfamily. In terms of assembly, homodimer. The tRNA molecule binds across the dimer.

Its subcellular location is the cytoplasm. It catalyses the reaction tRNA(Ser) + L-serine + ATP = L-seryl-tRNA(Ser) + AMP + diphosphate + H(+). The enzyme catalyses tRNA(Sec) + L-serine + ATP = L-seryl-tRNA(Sec) + AMP + diphosphate + H(+). It participates in aminoacyl-tRNA biosynthesis; selenocysteinyl-tRNA(Sec) biosynthesis; L-seryl-tRNA(Sec) from L-serine and tRNA(Sec): step 1/1. Catalyzes the attachment of serine to tRNA(Ser). Is also able to aminoacylate tRNA(Sec) with serine, to form the misacylated tRNA L-seryl-tRNA(Sec), which will be further converted into selenocysteinyl-tRNA(Sec). The chain is Serine--tRNA ligase from Escherichia fergusonii (strain ATCC 35469 / DSM 13698 / CCUG 18766 / IAM 14443 / JCM 21226 / LMG 7866 / NBRC 102419 / NCTC 12128 / CDC 0568-73).